We begin with the raw amino-acid sequence, 156 residues long: Protein LlR18B (156 aa).

Trans-zeatin contacts are provided by D8 and D28. The Ca(2+) site is built by P32 and I38. K54, E133, and K136 together coordinate trans-zeatin.

It belongs to the BetVI family. In terms of tissue distribution, ubiquitous, with higher levels in roots.

The protein resides in the cytoplasm. It localises to the cytosol. Its function is as follows. Class II ribonuclease (RNase), with low activity on single-strand RNA. Binds to cytokinins. Interacts with melatonin. This Lupinus luteus (European yellow lupine) protein is Protein LlR18B (LLR18B).